The sequence spans 538 residues: Beta-1-syntrophin (538 aa).

An N-acetylalanine modification is found at Ala-2. 2 PH domains span residues 19–298 (RAQR…SNVN) and 322–433 (EIRH…QGCH). Residues Ser-87, Ser-126, and Ser-205 each carry the phosphoserine modification. The PDZ domain occupies 112-195 (GVKVLKQELG…EVLLEVKYMR (84 aa)). Residues 205–237 (SPVSEIGWETPPPESPRLGGSTSDPPSSQSFSF) form a disordered region. Phosphothreonine is present on Thr-214. 4 positions are modified to phosphoserine: Ser-219, Ser-232, Ser-236, and Ser-389. Positions 225-236 (STSDPPSSQSFS) are enriched in low complexity. An SU domain is found at 482-538 (PYEKLKMSSDDGIRMLYLDFGGKDGEIQLDLHSCPKPIVFIIHSFLSAKITRLGLVA). The interval 518–538 (PIVFIIHSFLSAKITRLGLVA) is calmodulin-binding.

It belongs to the syntrophin family. Monomer and homodimer. Interacts with the other members of the syntrophin family SNTA1 and SNTB2; with the sodium channel proteins SCN4A and SCN5A. Interacts with the viral HTLV-1 TAX protein and with dystrophin protein DMD and related proteins DTNA and UTRN. Interacts with DTNB. In terms of processing, phosphorylated by CaM-kinase II. In terms of tissue distribution, ubiquitous.

It localises to the cell membrane. The protein resides in the sarcolemma. The protein localises to the cell junction. It is found in the cytoplasm. Its subcellular location is the cytoskeleton. Adapter protein that binds to and probably organizes the subcellular localization of a variety of membrane proteins. May link various receptors to the actin cytoskeleton and the dystrophin glycoprotein complex. This chain is Beta-1-syntrophin (SNTB1), found in Homo sapiens (Human).